The primary structure comprises 134 residues: UPF0412 protein YaaI (134 aa).

Positions 1–23 (MRSVLTISASLLFGLALSSVAHA) are cleaved as a signal peptide.

It belongs to the UPF0412 family.

The protein is UPF0412 protein YaaI of Salmonella paratyphi B (strain ATCC BAA-1250 / SPB7).